The chain runs to 403 residues: Imidazolonepropionase (403 aa).

His-68 and His-70 together coordinate Fe(3+). Positions 68 and 70 each coordinate Zn(2+). Residues Arg-77, Tyr-140, and His-173 each coordinate 4-imidazolone-5-propanoate. Tyr-140 contributes to the N-formimidoyl-L-glutamate binding site. His-238 lines the Fe(3+) pocket. Zn(2+) is bound at residue His-238. 4-imidazolone-5-propanoate is bound at residue Gln-241. Residue Asp-313 participates in Fe(3+) binding. Asp-313 is a Zn(2+) binding site. N-formimidoyl-L-glutamate contacts are provided by Asn-315 and Gly-317. Thr-318 provides a ligand contact to 4-imidazolone-5-propanoate.

The protein belongs to the metallo-dependent hydrolases superfamily. HutI family. Zn(2+) serves as cofactor. It depends on Fe(3+) as a cofactor.

The protein resides in the cytoplasm. It catalyses the reaction 4-imidazolone-5-propanoate + H2O = N-formimidoyl-L-glutamate. The protein operates within amino-acid degradation; L-histidine degradation into L-glutamate; N-formimidoyl-L-glutamate from L-histidine: step 3/3. Catalyzes the hydrolytic cleavage of the carbon-nitrogen bond in imidazolone-5-propanoate to yield N-formimidoyl-L-glutamate. It is the third step in the universal histidine degradation pathway. This is Imidazolonepropionase from Psychromonas ingrahamii (strain DSM 17664 / CCUG 51855 / 37).